The following is a 304-amino-acid chain: MPQQLSPINIETKKAISNARLKPLDIHYNESKPTTIQNTGKLVRINFKGGYISGGFLPNEYVLSSLRIYWGKEDDYGSNHLIDVYKYSGEINLVHWNKKKYSSYEEAKKHDDGLIIISIFLQVSDHKNVYFQKIVNQLDSIRSTNTSAPFDSVFYLDNLLPSKLDYFTYLGTTINHSADAVWIIFPTPINIHSDQLSKFRTLLSSSNHDGKPHYITENYRNPYKLNDDTQVYYSGEIIRAATTSPARENYFMRWLSDLRETCFSYYQKYIEGNKTFAIIAIVFVFILTAILFFMSQRYSREKQN.

Residues 1-235 form the Alpha-carbonic anhydrase domain; it reads MPQQLSPINI…NDDTQVYYSG (235 aa). Residues 1–275 lie on the Virion surface side of the membrane; that stretch reads MPQQLSPINI…YQKYIEGNKT (275 aa). A helical transmembrane segment spans residues 276 to 294; it reads FAIIAIVFVFILTAILFFM. The Intravirion segment spans residues 295 to 304; the sequence is SQRYSREKQN.

This sequence belongs to the alpha-carbonic anhydrase family. Homodimer; disulfide-linked. In terms of processing, apparently non-glycosylated.

The protein resides in the virion membrane. Its function is as follows. Binds to chondroitin sulfate on the cell surface to provide virion attachment to target cell. The polypeptide is Cell surface-binding protein OPG105 (OPG105) (Vaccinia virus (strain Ankara) (VACV)).